A 269-amino-acid chain; its full sequence is Basic leucine zipper 19 (269 aa).

The bZIP domain maps to 140–196 (DPKRVKRILANRQSAQRSRVRKLQYISELERSVTTLQMEVSALSPRVAFLDHQRSLL). The tract at residues 142–161 (KRVKRILANRQSAQRSRVRK) is basic motif. The segment at 168 to 196 (LERSVTTLQMEVSALSPRVAFLDHQRSLL) is leucine-zipper.

In terms of tissue distribution, expressed in roots and shoots.

Its subcellular location is the nucleus. Its function is as follows. Transcription regulator. The chain is Basic leucine zipper 19 (BZIP19) from Oryza sativa subsp. japonica (Rice).